A 157-amino-acid chain; its full sequence is Peptide methionine sulfoxide reductase MsrA (157 aa).

C10 is an active-site residue.

Belongs to the MsrA Met sulfoxide reductase family.

The catalysed reaction is L-methionyl-[protein] + [thioredoxin]-disulfide + H2O = L-methionyl-(S)-S-oxide-[protein] + [thioredoxin]-dithiol. It carries out the reaction [thioredoxin]-disulfide + L-methionine + H2O = L-methionine (S)-S-oxide + [thioredoxin]-dithiol. Its function is as follows. Has an important function as a repair enzyme for proteins that have been inactivated by oxidation. Catalyzes the reversible oxidation-reduction of methionine sulfoxide in proteins to methionine. This Clostridium perfringens (strain SM101 / Type A) protein is Peptide methionine sulfoxide reductase MsrA.